The following is a 266-amino-acid chain: Putative expansin-A30 (266 aa).

The first 24 residues, 1–24 (MAAASSTTATTAILAAVIISLAGA), serve as a signal peptide directing secretion. Positions 55–170 (GGACGYGNLY…RRVPCARAGG (116 aa)) constitute an Expansin-like EG45 domain. Residues 180-261 (YWLLAYVMNV…SWCFGLTYQA (82 aa)) form the Expansin-like CBD domain.

It belongs to the expansin family. Expansin A subfamily.

It is found in the secreted. Its subcellular location is the cell wall. It localises to the membrane. In terms of biological role, may cause loosening and extension of plant cell walls by disrupting non-covalent bonding between cellulose microfibrils and matrix glucans. No enzymatic activity has been found. May be required for rapid internodal elongation in deepwater rice during submergence. The polypeptide is Putative expansin-A30 (EXPA30) (Oryza sativa subsp. japonica (Rice)).